The following is a 229-amino-acid chain: Protein FAM3C (229 aa).

Residues 1-24 (MRIAGAIKFVVAVALFLLTFYVIS) form the signal peptide. 2 cysteine pairs are disulfide-bonded: Cys-59–Cys-87 and Cys-65–Cys-222. A GG-type lectin domain is found at 68-226 (KHFAFKIASG…VEMEGCIPQK (159 aa)).

It belongs to the FAM3 family. Expressed in the retinal ganglion cell layer.

The protein localises to the secreted. Functionally, involved in retinal laminar formation. This is Protein FAM3C (fam3c) from Xenopus laevis (African clawed frog).